Reading from the N-terminus, the 89-residue chain is UPF0297 protein SUB1776 (89 aa).

It belongs to the UPF0297 family.

This Streptococcus uberis (strain ATCC BAA-854 / 0140J) protein is UPF0297 protein SUB1776.